A 719-amino-acid polypeptide reads, in one-letter code: Fatty acid oxidation complex subunit alpha (719 aa).

The interval M1 to A190 is enoyl-CoA hydratase/isomerase. D298 contacts substrate. Residues H313 to A719 form a 3-hydroxyacyl-CoA dehydrogenase region. NAD(+) is bound by residues M326, D345, V402–E404, K409, and S431. H452 serves as the catalytic For 3-hydroxyacyl-CoA dehydrogenase activity. Residue N455 participates in NAD(+) binding. A substrate-binding site is contributed by N502.

The protein in the N-terminal section; belongs to the enoyl-CoA hydratase/isomerase family. This sequence in the C-terminal section; belongs to the 3-hydroxyacyl-CoA dehydrogenase family. Heterotetramer of two alpha chains (FadB) and two beta chains (FadA).

It carries out the reaction a (3S)-3-hydroxyacyl-CoA + NAD(+) = a 3-oxoacyl-CoA + NADH + H(+). The catalysed reaction is a (3S)-3-hydroxyacyl-CoA = a (2E)-enoyl-CoA + H2O. The enzyme catalyses a 4-saturated-(3S)-3-hydroxyacyl-CoA = a (3E)-enoyl-CoA + H2O. It catalyses the reaction (3S)-3-hydroxybutanoyl-CoA = (3R)-3-hydroxybutanoyl-CoA. It carries out the reaction a (3Z)-enoyl-CoA = a 4-saturated (2E)-enoyl-CoA. The catalysed reaction is a (3E)-enoyl-CoA = a 4-saturated (2E)-enoyl-CoA. The protein operates within lipid metabolism; fatty acid beta-oxidation. Involved in the aerobic and anaerobic degradation of long-chain fatty acids via beta-oxidation cycle. Catalyzes the formation of 3-oxoacyl-CoA from enoyl-CoA via L-3-hydroxyacyl-CoA. It can also use D-3-hydroxyacyl-CoA and cis-3-enoyl-CoA as substrate. In Psychrobacter cryohalolentis (strain ATCC BAA-1226 / DSM 17306 / VKM B-2378 / K5), this protein is Fatty acid oxidation complex subunit alpha.